The following is an 860-amino-acid chain: Leucine--tRNA ligase (860 aa).

Residues 42 to 52 carry the 'HIGH' region motif; the sequence is PYPSGRLHMGH. Residues 619 to 623 carry the 'KMSKS' region motif; the sequence is KMSKS. An ATP-binding site is contributed by K622.

This sequence belongs to the class-I aminoacyl-tRNA synthetase family.

The protein resides in the cytoplasm. It catalyses the reaction tRNA(Leu) + L-leucine + ATP = L-leucyl-tRNA(Leu) + AMP + diphosphate. This is Leucine--tRNA ligase from Pectobacterium atrosepticum (strain SCRI 1043 / ATCC BAA-672) (Erwinia carotovora subsp. atroseptica).